A 195-amino-acid polypeptide reads, in one-letter code: dTTP/UTP pyrophosphatase (195 aa).

The active-site Proton acceptor is the aspartate 70.

This sequence belongs to the Maf family. YhdE subfamily. Requires a divalent metal cation as cofactor.

Its subcellular location is the cytoplasm. The enzyme catalyses dTTP + H2O = dTMP + diphosphate + H(+). It catalyses the reaction UTP + H2O = UMP + diphosphate + H(+). Functionally, nucleoside triphosphate pyrophosphatase that hydrolyzes dTTP and UTP. May have a dual role in cell division arrest and in preventing the incorporation of modified nucleotides into cellular nucleic acids. The chain is dTTP/UTP pyrophosphatase from Photorhabdus laumondii subsp. laumondii (strain DSM 15139 / CIP 105565 / TT01) (Photorhabdus luminescens subsp. laumondii).